Here is a 391-residue protein sequence, read N- to C-terminus: Curcumin synthase 2 (391 aa).

Residue Cys-166 is part of the active site.

This sequence belongs to the thiolase-like superfamily. Chalcone/stilbene synthases family. As to quaternary structure, homodimer.

The catalysed reaction is (E)-feruloylacetyl-CoA + (E)-feruloyl-CoA + H2O = curcumin + CO2 + 2 CoA. The protein operates within secondary metabolite biosynthesis; flavonoid biosynthesis. Its function is as follows. Catalyzes the synthesis of curcumin by condensing feruloyl-CoA with a diketide-CoA in the curcuminoid biosynthesis. The chain is Curcumin synthase 2 (CURS2) from Curcuma longa (Turmeric).